The chain runs to 425 residues: Serine--tRNA ligase (425 aa).

Residue 230–232 coordinates L-serine; that stretch reads TAE. Residue 261 to 263 participates in ATP binding; it reads RQE. Residue glutamate 284 participates in L-serine binding. An ATP-binding site is contributed by 348 to 351; the sequence is EISS. Position 384 (serine 384) interacts with L-serine.

The protein belongs to the class-II aminoacyl-tRNA synthetase family. Type-1 seryl-tRNA synthetase subfamily. In terms of assembly, homodimer. The tRNA molecule binds across the dimer.

It is found in the cytoplasm. It catalyses the reaction tRNA(Ser) + L-serine + ATP = L-seryl-tRNA(Ser) + AMP + diphosphate + H(+). The enzyme catalyses tRNA(Sec) + L-serine + ATP = L-seryl-tRNA(Sec) + AMP + diphosphate + H(+). Its pathway is aminoacyl-tRNA biosynthesis; selenocysteinyl-tRNA(Sec) biosynthesis; L-seryl-tRNA(Sec) from L-serine and tRNA(Sec): step 1/1. In terms of biological role, catalyzes the attachment of serine to tRNA(Ser). Is also able to aminoacylate tRNA(Sec) with serine, to form the misacylated tRNA L-seryl-tRNA(Sec), which will be further converted into selenocysteinyl-tRNA(Sec). This is Serine--tRNA ligase from Caldanaerobacter subterraneus subsp. tengcongensis (strain DSM 15242 / JCM 11007 / NBRC 100824 / MB4) (Thermoanaerobacter tengcongensis).